The primary structure comprises 174 residues: Repair DNA polymerase X (174 aa).

Residues 42–51 form an involved in ssDNA binding region; sequence REEKMLNDVD. Residues Asp49 and Asp51 each contribute to the Mg(2+) site. Cys81 and Cys86 are joined by a disulfide. Mg(2+) is bound at residue Asp100.

The protein belongs to the DNA polymerase type-X family. Mg(2+) serves as cofactor.

The protein resides in the virion. The catalysed reaction is DNA(n) + a 2'-deoxyribonucleoside 5'-triphosphate = DNA(n+1) + diphosphate. Its function is as follows. Error-prone polymerase lacking a proofreading 3'-5' exonuclease which catalyzes the gap-filling reaction during the DNA repair process. Specifically binds intermediates in the single-nucleotide base-excision repair process. Also catalyzes DNA polymerization with low nucleotide-insertion fidelity. Probably acts as a strategic DNA mutase, which gives rise to a rapid emergence of variants. Generates mismatched G-G pairs, in that case, the polymerase first binds the deoxynucleotide followed by mismatch formation. Together with the viral DNA ligase, fills the single nucleotide gaps generated by the AP endonuclease. Binds DNA with high affinity via the helix alphaE. This is Repair DNA polymerase X from Ornithodoros (relapsing fever ticks).